The chain runs to 379 residues: Transcription factor TIP2 (379 aa).

Residues 144–184 (MVGPFESSPTPRSGGGRKRSRATAGFHGGGPANGVEKKEKQ) are disordered. The interval 173–186 (GPANGVEKKEKQRR) is basic motif; degenerate. A bHLH domain is found at 173-222 (GPANGVEKKEKQRRLRLTEKYNALMLLIPNRTKEDRATVISDAIEYIQEL). The helix-loop-helix motif stretch occupies residues 187–222 (LRLTEKYNALMLLIPNRTKEDRATVISDAIEYIQEL).

The protein belongs to the bHLH protein family. In terms of assembly, homodimer. Interacts with TDR, but not with EAT1. As to expression, highly expressed in anthers; strong expression in the middle layer and tapetum, and weak expression in the endothecium.

Its subcellular location is the nucleus. Functionally, transcription factor that binds to the E-box-containing promoter regions of the transcription factors TDR and EAT1, activating their expression. May have a role in specifying the cell pattern of the inner anther walls and functioning in meiosis progression. Required for male reproduction. Acts downstream of UDT1 and GAMYB, but upstream of TDR1 and EAT1 in pollen development. This Oryza sativa subsp. japonica (Rice) protein is Transcription factor TIP2 (TIP2).